Here is an 889-residue protein sequence, read N- to C-terminus: Coatomer subunit beta' (889 aa).

WD repeat units follow at residues 11–41 (NRSD…ELWN), 53–83 (VTET…RVFN), 95–125 (AHPD…KLWN), 138–169 (GHEH…KVWS), 182–214 (GQER…KIWD), and 226–256 (GHMS…KIWN). Serine 326 is modified (phosphoserine). The segment at 806–889 (CGAEGLPGSS…AVPEPVEEES (84 aa)) is disordered. Basic and acidic residues predominate over residues 836–864 (DENKEAEVEDSEFKESNSEAVEAEKKEEE). The segment covering 866–879 (PQQQQSEQQPEQGE) has biased composition (low complexity).

It belongs to the WD repeat COPB2 family. In terms of assembly, oligomeric complex that consists of at least the alpha, beta, beta', gamma, delta, epsilon and zeta subunits. Interacts with the ESCRT-0 subunit VPS27.

The protein localises to the cytoplasm. It is found in the golgi apparatus membrane. Its subcellular location is the cytoplasmic vesicle. The protein resides in the COPI-coated vesicle membrane. In terms of biological role, the coatomer is a cytosolic protein complex that binds to dilysine motifs and reversibly associates with Golgi non-clathrin-coated vesicles, which further mediate biosynthetic protein transport from the ER, via the Golgi up to the trans Golgi network. Coatomer complex is required for budding from Golgi membranes, and is essential for the retrograde Golgi-to-ER transport of dilysine-tagged proteins. In Saccharomyces cerevisiae (strain ATCC 204508 / S288c) (Baker's yeast), this protein is Coatomer subunit beta' (SEC27).